We begin with the raw amino-acid sequence, 479 residues long: Cyclin-dependent kinase F-1 (479 aa).

Residues 21–418 enclose the Protein kinase domain; that stretch reads YEIFERVGSG…TMEMLNDKYL (398 aa). ATP-binding positions include 27–35 and lysine 50; that span reads VGSGAYADV. A Phosphotyrosine modification is found at tyrosine 32. Catalysis depends on aspartate 146, which acts as the Proton acceptor. Phosphoserine occurs at positions 179, 208, and 247. Residues 187 to 221 form a disordered region; sequence KLEDKDGETSEPPEVIPDYENSPRQGSDGQEREAM. At threonine 290 the chain carries Phosphothreonine. The tract at residues 434–479 is disordered; the sequence is PTMSGPDEDSPRKWNDYREMDSDSDFDGFGPMNVKPTSSGFTIEFP. The segment covering 442 to 454 has biased composition (basic and acidic residues); the sequence is DSPRKWNDYREMD. The segment covering 468-479 has biased composition (polar residues); sequence KPTSSGFTIEFP.

It belongs to the protein kinase superfamily. CMGC Ser/Thr protein kinase family. CDC2/CDKX subfamily. Highly expressed in suspension cell culture. Expressed at low levels in all plant organs.

The catalysed reaction is L-seryl-[protein] + ATP = O-phospho-L-seryl-[protein] + ADP + H(+). It carries out the reaction L-threonyl-[protein] + ATP = O-phospho-L-threonyl-[protein] + ADP + H(+). The enzyme catalyses [DNA-directed RNA polymerase] + ATP = phospho-[DNA-directed RNA polymerase] + ADP + H(+). Its function is as follows. CDK-activating kinase that modulates CDKD-2 and CDKD-3 activities by phosphorylation of the T-loop. Activates CDKD-2 C-terminal domain (CTD) kinase activity. Activates CDKA-1 probably by phosphorylation. Possesses a CDK kinase activity independently of association with cyclin CYCH1-1. Phosphorylates the CTD of the large subunit of RNA polymerase II. This chain is Cyclin-dependent kinase F-1 (CDKF-1), found in Arabidopsis thaliana (Mouse-ear cress).